The following is a 138-amino-acid chain: Mini-ribonuclease 3 (138 aa).

Asp-33 is an active-site residue.

The protein belongs to the MrnC RNase family. As to quaternary structure, homodimer. Mg(2+) is required as a cofactor.

It localises to the cytoplasm. Functionally, involved in correct processing of both the 5' and 3' ends of 23S rRNA precursor. Processes 30S rRNA precursor transcript even in absence of ribonuclease 3 (Rnc); Rnc processes 30S rRNA into smaller rRNA precursors. The polypeptide is Mini-ribonuclease 3 (Synechococcus sp. (strain ATCC 27144 / PCC 6301 / SAUG 1402/1) (Anacystis nidulans)).